A 227-amino-acid chain; its full sequence is MFDLSDQLIAMGLWSISIGAFGAAVAGILLANTDLFLTQTEEATLDYLEETELKAIGDEPKSFKAKDLWEKNGAVVMAVRRPGCFLCREEASDLSSLKSQLDQLGVPLYAVVKENIGNEVEQFQPYFNGKIFLDEKGKFYGPQKRKMMFLGLVRLGVWQNFRRAWKGGFEGNLEGEGLILGGMFVIGSGKQGILLEHREKEFGDKANLTAVLDAARKINKQRAQNDN.

Residues 13–111 (LWSISIGAFG…DQLGVPLYAV (99 aa)) form a thioredoxin fold region. Active-site redox-active residues include C84 and C87.

The protein belongs to the peroxiredoxin-like PRXL2 family. PRXL2A subfamily.

It localises to the cytoplasm. Functionally, involved in redox regulation of the cell. Acts as an antioxidant. This Xenopus tropicalis (Western clawed frog) protein is Peroxiredoxin-like 2A (prxl2a).